The chain runs to 87 residues: MVNMKASMFLTFAGLVLLFVVCYASGSEEKEFPKEMLSSIFAVDNDFKQEERDCAGYMRECKEKLCCSGYVCSSRWKWCVLPAPWRR.

The first 24 residues, 1–24, serve as a signal peptide directing secretion; sequence MVNMKASMFLTFAGLVLLFVVCYA. The propeptide occupies 25–52; sequence SGSEEKEFPKEMLSSIFAVDNDFKQEER. Cystine bridges form between Cys54–Cys67, Cys61–Cys72, and Cys66–Cys79.

This sequence belongs to the neurotoxin 10 (Hwtx-1) family. 51 (Hntx-8) subfamily. Hntx-8 sub-subfamily. Expressed by the venom gland.

It is found in the secreted. In terms of biological role, ion channel inhibitor. The polypeptide is U3-theraphotoxin-Hhn1a 8 (Cyriopagopus hainanus (Chinese bird spider)).